Here is a 134-residue protein sequence, read N- to C-terminus: UPF0216 protein AF_0460 (134 aa).

The protein belongs to the UPF0216 family.

The chain is UPF0216 protein AF_0460 from Archaeoglobus fulgidus (strain ATCC 49558 / DSM 4304 / JCM 9628 / NBRC 100126 / VC-16).